A 584-amino-acid chain; its full sequence is ETHYLENE INSENSITIVE 3-like 1 protein (584 aa).

A coiled-coil region spans residues tyrosine 41–glutamate 74. The span at glutamate 67–lysine 80 shows a compositional bias: basic and acidic residues. Disordered regions lie at residues glutamate 67–methionine 93 and glutamate 565–phenylalanine 584.

Belongs to the EIN3 family. As to quaternary structure, acts as a homodimer to bind the primary ethylene response element.

The protein resides in the nucleus. Functionally, probable transcription factor acting as a positive regulator in the ethylene response pathway. Could bind the primary ethylene response element present in the ETHYLENE-RESPONSE-FACTOR1 promoter. In Arabidopsis thaliana (Mouse-ear cress), this protein is ETHYLENE INSENSITIVE 3-like 1 protein (EIL1).